Here is a 233-residue protein sequence, read N- to C-terminus: Homeobox protein Hox-B6b (233 aa).

The Antp-type hexapeptide signature appears at 136–141; the sequence is IYPWMQ. A DNA-binding region (homeobox) is located at residues 155 to 214; the sequence is GRRGRQTYTRYQTLELEKEFHFNRYLTRRRRIEISHALCLTERQIKIWFQNRRMKWKKEN. The tract at residues 213 to 233 is disordered; it reads ENKLLNPSKTPEEEEEAEKKS. A compositionally biased stretch (acidic residues) spans 224–233; the sequence is EEEEEAEKKS.

Belongs to the Antp homeobox family.

Its subcellular location is the nucleus. Functionally, sequence-specific transcription factor which is part of a developmental regulatory system that provides cells with specific positional identities on the anterior-posterior axis. The sequence is that of Homeobox protein Hox-B6b (hoxb6b) from Takifugu rubripes (Japanese pufferfish).